We begin with the raw amino-acid sequence, 208 residues long: Small ribosomal subunit protein uS4 (208 aa).

Residues 98 to 163 form the S4 RNA-binding domain; it reads SRLDNVVYRA…LTPFVIARAV (66 aa).

Belongs to the universal ribosomal protein uS4 family. In terms of assembly, part of the 30S ribosomal subunit. Contacts protein S5. The interaction surface between S4 and S5 is involved in control of translational fidelity.

In terms of biological role, one of the primary rRNA binding proteins, it binds directly to 16S rRNA where it nucleates assembly of the body of the 30S subunit. Its function is as follows. With S5 and S12 plays an important role in translational accuracy. This chain is Small ribosomal subunit protein uS4, found in Acidothermus cellulolyticus (strain ATCC 43068 / DSM 8971 / 11B).